We begin with the raw amino-acid sequence, 384 residues long: Epoxyqueuosine reductase (384 aa).

Asp-144 serves as the catalytic Proton donor. In terms of domain architecture, 4Fe-4S ferredoxin-type spans 186–218 (LPLPVDQPVEEGCGKCVACMTICPTGAIVEPYT). [4Fe-4S] cluster-binding residues include Cys-198, Cys-201, Cys-204, Cys-208, Cys-224, Cys-251, Cys-254, and Cys-258.

The protein belongs to the QueG family. As to quaternary structure, monomer. Requires cob(II)alamin as cofactor. It depends on [4Fe-4S] cluster as a cofactor.

It localises to the cytoplasm. It catalyses the reaction epoxyqueuosine(34) in tRNA + AH2 = queuosine(34) in tRNA + A + H2O. The protein operates within tRNA modification; tRNA-queuosine biosynthesis. Catalyzes the conversion of epoxyqueuosine (oQ) to queuosine (Q), which is a hypermodified base found in the wobble positions of tRNA(Asp), tRNA(Asn), tRNA(His) and tRNA(Tyr). The chain is Epoxyqueuosine reductase from Salmonella typhimurium (strain LT2 / SGSC1412 / ATCC 700720).